The chain runs to 246 residues: MyoD family inhibitor domain-containing protein (246 aa).

Disordered regions lie at residues 1–93 (MSQE…EEET) and 134–164 (KIQS…ASPE). At 1–170 (MSQEREPFSP…ASPEDGCVHC (170 aa)) the chain is on the extracellular side. Residues 63 to 87 (EDNSNSQPIKAQPQRLPQPNTSALE) are compositionally biased toward polar residues. Residues 74-246 (QPQRLPQPNT…MECCGICFPS (173 aa)) form the MDFI domain. Residues 171-188 (ILTCLFCEFLTLCNIVVG) traverse the membrane as a helical segment. Topologically, residues 189 to 246 (QASCGICTSEACCCCCTEEMGDDCNCPCDMDCGIMDACCESSDCLEICMECCGICFPS) are cytoplasmic.

It belongs to the MDFI family. Expressed broadly at a low level in the early embryo.

It localises to the cytoplasm. The protein localises to the cell membrane. The protein resides in the secreted. In terms of biological role, required to control the activity of various transcription factors through their sequestration in the cytoplasm. Retains nuclear Zic proteins in the cytoplasm and inhibits their transcriptional activation. Required for dorsoanterior development. Necessary for siamois to activate downstream target genes, including gsc, during execution of the dorsal organizer program. Also regulates the transcriptional activity of TCF7L1/TCF3 by interacting directly with TCF7L1/TCF3 and preventing it from binding DNA. Involved in the development of lymphatic vessel valves. It is required to promote lymphatic endothelial cell migration, in a process that involves down-regulation of integrin beta 1 activation and control of cell adhesion to the extracellular matrix. This is MyoD family inhibitor domain-containing protein from Xenopus laevis (African clawed frog).